The primary structure comprises 373 residues: L-threonine 3-dehydrogenase, mitochondrial (373 aa).

NAD(+) contacts are provided by residues 62–67, 88–90, 106–107, tyrosine 195, lysine 199, and isoleucine 225; these read GGLGQL, DIR, and DI. The active-site Proton donor/acceptor is the tyrosine 195.

The protein belongs to the NAD(P)-dependent epimerase/dehydratase family. In terms of assembly, homodimer.

Its subcellular location is the mitochondrion. The enzyme catalyses L-threonine + NAD(+) = (2S)-2-amino-3-oxobutanoate + NADH + H(+). It participates in amino-acid degradation; L-threonine degradation via oxydo-reductase pathway; glycine from L-threonine: step 1/2. In terms of biological role, catalyzes the NAD(+)-dependent oxidation of L-threonine to 2-amino-3-ketobutyrate, mediating L-threonine catabolism. The polypeptide is L-threonine 3-dehydrogenase, mitochondrial (Sus scrofa (Pig)).